Reading from the N-terminus, the 904-residue chain is Translation initiation factor IF-2 (904 aa).

Residues 239 to 316 (QAATQAKTSE…DDGQGSFQAP (78 aa)) are disordered. Basic and acidic residues predominate over residues 248 to 278 (EGAEKGTLHKKPETPGKKGDKGGRAADDGKK). The region spanning 404 to 571 (HRAPVVTVMG…QVLLQAEILE (168 aa)) is the tr-type G domain. The segment at 413-420 (GHVDHGKT) is G1. 413–420 (GHVDHGKT) is a GTP binding site. The tract at residues 438-442 (GITQH) is G2. Residues 459–462 (DTPG) are G3. GTP-binding positions include 459-463 (DTPGH) and 513-516 (NKID). The interval 513 to 516 (NKID) is G4. Residues 549–551 (SAK) are G5.

It belongs to the TRAFAC class translation factor GTPase superfamily. Classic translation factor GTPase family. IF-2 subfamily.

It is found in the cytoplasm. In terms of biological role, one of the essential components for the initiation of protein synthesis. Protects formylmethionyl-tRNA from spontaneous hydrolysis and promotes its binding to the 30S ribosomal subunits. Also involved in the hydrolysis of GTP during the formation of the 70S ribosomal complex. The chain is Translation initiation factor IF-2 from Dechloromonas aromatica (strain RCB).